The chain runs to 480 residues: Argininosuccinate lyase (480 aa).

The disordered stretch occupies residues 1 to 20 (MTQQDGGQAGQAEPTKLWGG).

It belongs to the lyase 1 family. Argininosuccinate lyase subfamily.

It is found in the cytoplasm. It catalyses the reaction 2-(N(omega)-L-arginino)succinate = fumarate + L-arginine. It participates in amino-acid biosynthesis; L-arginine biosynthesis; L-arginine from L-ornithine and carbamoyl phosphate: step 3/3. The chain is Argininosuccinate lyase from Saccharopolyspora erythraea (strain ATCC 11635 / DSM 40517 / JCM 4748 / NBRC 13426 / NCIMB 8594 / NRRL 2338).